The chain runs to 223 residues: Virulence transcriptional regulatory protein PhoP (223 aa).

The region spanning 2–116 (RVLVVEDNAL…EVMARMQALM (115 aa)) is the Response regulatory domain. Residue Asp-51 is modified to 4-aspartylphosphate. The ompR/PhoB-type DNA-binding region spans 124 to 222 (SQVISLPPFQ…VRGQGYLFEL (99 aa)).

In terms of processing, phosphorylated by PhoQ.

It localises to the cytoplasm. Its function is as follows. Member of the two-component regulatory system PhoQ/PhoP involved in virulence and adaptation to low Mg(2+) environments. Necessary for resistance to killing by polymorphonuclear leukocytes (PMNs) and cationic antimicrobial peptides (CAMP) they produce. The chain is Virulence transcriptional regulatory protein PhoP (phoP) from Shigella flexneri.